A 148-amino-acid polypeptide reads, in one-letter code: Ribonuclease H (148 aa).

The RNase H type-1 domain maps to 3–144 (AEETVEIFTD…ADALANRGIE (142 aa)). Residues aspartate 12, glutamate 50, aspartate 72, and aspartate 136 each contribute to the Mg(2+) site. Positions 129 to 148 (HPENERADALANRGIEELKG) are disordered.

It belongs to the RNase H family. In terms of assembly, monomer. Mg(2+) is required as a cofactor.

The protein localises to the cytoplasm. The enzyme catalyses Endonucleolytic cleavage to 5'-phosphomonoester.. Endonuclease that specifically degrades the RNA of RNA-DNA hybrids. The polypeptide is Ribonuclease H (Dechloromonas aromatica (strain RCB)).